A 38-amino-acid polypeptide reads, in one-letter code: Photosystem II reaction center protein L (38 aa).

The chain crosses the membrane as a helical span at residues 17–37 (SLYWGLLLIFVLAVLFSSYIF).

This sequence belongs to the PsbL family. In terms of assembly, PSII is composed of 1 copy each of membrane proteins PsbA, PsbB, PsbC, PsbD, PsbE, PsbF, PsbH, PsbI, PsbJ, PsbK, PsbL, PsbM, PsbT, PsbY, PsbZ, Psb30/Ycf12, at least 3 peripheral proteins of the oxygen-evolving complex and a large number of cofactors. It forms dimeric complexes.

The protein localises to the plastid. Its subcellular location is the chloroplast thylakoid membrane. Its function is as follows. One of the components of the core complex of photosystem II (PSII). PSII is a light-driven water:plastoquinone oxidoreductase that uses light energy to abstract electrons from H(2)O, generating O(2) and a proton gradient subsequently used for ATP formation. It consists of a core antenna complex that captures photons, and an electron transfer chain that converts photonic excitation into a charge separation. This subunit is found at the monomer-monomer interface and is required for correct PSII assembly and/or dimerization. In Bigelowiella natans (Pedinomonas minutissima), this protein is Photosystem II reaction center protein L.